Consider the following 264-residue polypeptide: Somatomedin-B and thrombospondin type-1 domain-containing protein (264 aa).

Positions 1–20 (MRTLWMALCVLARLWPGALA) are cleaved as a signal peptide. The SMB domain maps to 24–75 (DAGRCCPGRDPACFASGWRQDRVYGTCFCDQACRLTGDCCFDYARACPARPC). 7 disulfides stabilise this stretch: Cys28-Cys36, Cys28-Cys52, Cys36-Cys70, Cys50-Cys52, Cys50-Cys63, Cys56-Cys62, and Cys63-Cys70. One can recognise a TSP type-1 domain in the interval 74–127 (PCIVGEWSPWSGCASQCRPTARVRRRAVQQEPQNGGEPCPALEERAGCLEYATP). N-linked (GlcNAc...) asparagine glycosylation is present at Asn227.

Belongs to the thrombospondin family.

Its subcellular location is the secreted. The protein resides in the extracellular space. It is found in the extracellular matrix. This Bos taurus (Bovine) protein is Somatomedin-B and thrombospondin type-1 domain-containing protein (SBSPON).